Reading from the N-terminus, the 106-residue chain is Toxin-like structure LSTX-D5 (106 aa).

An N-terminal signal peptide occupies residues 1–20 (MMKVLVVVALLVTLISYSSS). The propeptide occupies 21 to 41 (EGIDDLETDELLSLMANEQTR). Intrachain disulfides connect Cys45-Cys60, Cys52-Cys69, Cys59-Cys85, and Cys71-Cys83.

It belongs to the neurotoxin 19 (CSTX) family. 02 (D7) subfamily. As to expression, expressed by the venom gland.

It is found in the secreted. The polypeptide is Toxin-like structure LSTX-D5 (Lycosa singoriensis (Wolf spider)).